The primary structure comprises 277 residues: S-formylglutathione hydrolase FrmB (277 aa).

Catalysis depends on charge relay system residues Ser-145, Asp-221, and His-254.

It belongs to the esterase D family.

It catalyses the reaction S-formylglutathione + H2O = formate + glutathione + H(+). Its function is as follows. Serine hydrolase involved in the detoxification of formaldehyde. Hydrolyzes S-formylglutathione to glutathione and formate. This is S-formylglutathione hydrolase FrmB (frmB) from Escherichia coli O6:K15:H31 (strain 536 / UPEC).